A 435-amino-acid chain; its full sequence is UDP-N-acetylmuramate--L-alanine ligase (435 aa).

An ATP-binding site is contributed by 108-114 (GAHGKST).

This sequence belongs to the MurCDEF family.

The protein resides in the cytoplasm. It carries out the reaction UDP-N-acetyl-alpha-D-muramate + L-alanine + ATP = UDP-N-acetyl-alpha-D-muramoyl-L-alanine + ADP + phosphate + H(+). It participates in cell wall biogenesis; peptidoglycan biosynthesis. Functionally, cell wall formation. In Campylobacter curvus (strain 525.92), this protein is UDP-N-acetylmuramate--L-alanine ligase.